The following is a 156-amino-acid chain: ATP synthase subunit b 2 (156 aa).

A helical membrane pass occupies residues L7–V29.

This sequence belongs to the ATPase B chain family. F-type ATPases have 2 components, F(1) - the catalytic core - and F(0) - the membrane proton channel. F(1) has five subunits: alpha(3), beta(3), gamma(1), delta(1), epsilon(1). F(0) has three main subunits: a(1), b(2) and c(10-14). The alpha and beta chains form an alternating ring which encloses part of the gamma chain. F(1) is attached to F(0) by a central stalk formed by the gamma and epsilon chains, while a peripheral stalk is formed by the delta and b chains.

The protein localises to the cell inner membrane. In terms of biological role, f(1)F(0) ATP synthase produces ATP from ADP in the presence of a proton or sodium gradient. F-type ATPases consist of two structural domains, F(1) containing the extramembraneous catalytic core and F(0) containing the membrane proton channel, linked together by a central stalk and a peripheral stalk. During catalysis, ATP synthesis in the catalytic domain of F(1) is coupled via a rotary mechanism of the central stalk subunits to proton translocation. Its function is as follows. Component of the F(0) channel, it forms part of the peripheral stalk, linking F(1) to F(0). The polypeptide is ATP synthase subunit b 2 (Marinomonas sp. (strain MWYL1)).